A 258-amino-acid polypeptide reads, in one-letter code: Regulatory protein RecX (258 aa).

This sequence belongs to the RecX family.

Its subcellular location is the cytoplasm. Modulates RecA activity. This chain is Regulatory protein RecX, found in Streptococcus pyogenes serotype M12 (strain MGAS2096).